The chain runs to 119 residues: Methylglyoxal synthase (119 aa).

One can recognise an MGS-like domain in the interval 1–119 (MRIALIAHDK…GTADLIIKQF (119 aa)). Substrate is bound by residues His8, Lys12, 34 to 37 (TGTT), and 54 to 55 (SG). Asp60 (proton donor/acceptor) is an active-site residue. Residue His87 participates in substrate binding.

Belongs to the methylglyoxal synthase family.

It carries out the reaction dihydroxyacetone phosphate = methylglyoxal + phosphate. In terms of biological role, catalyzes the formation of methylglyoxal from dihydroxyacetone phosphate. This chain is Methylglyoxal synthase, found in Clostridium botulinum (strain Eklund 17B / Type B).